The primary structure comprises 199 residues: Nucleoside triphosphate pyrophosphatase (199 aa).

D76 functions as the Proton acceptor in the catalytic mechanism.

This sequence belongs to the Maf family. A divalent metal cation is required as a cofactor.

It is found in the cytoplasm. It carries out the reaction a ribonucleoside 5'-triphosphate + H2O = a ribonucleoside 5'-phosphate + diphosphate + H(+). The catalysed reaction is a 2'-deoxyribonucleoside 5'-triphosphate + H2O = a 2'-deoxyribonucleoside 5'-phosphate + diphosphate + H(+). Its function is as follows. Nucleoside triphosphate pyrophosphatase. May have a dual role in cell division arrest and in preventing the incorporation of modified nucleotides into cellular nucleic acids. This chain is Nucleoside triphosphate pyrophosphatase, found in Roseobacter denitrificans (strain ATCC 33942 / OCh 114) (Erythrobacter sp. (strain OCh 114)).